The chain runs to 879 residues: Phosphoenolpyruvate carboxylase (879 aa).

Catalysis depends on residues His138 and Lys545.

The protein belongs to the PEPCase type 1 family. Requires Mg(2+) as cofactor.

It catalyses the reaction oxaloacetate + phosphate = phosphoenolpyruvate + hydrogencarbonate. Functionally, forms oxaloacetate, a four-carbon dicarboxylic acid source for the tricarboxylic acid cycle. This Actinobacillus pleuropneumoniae serotype 5b (strain L20) protein is Phosphoenolpyruvate carboxylase.